The following is a 227-amino-acid chain: Cytochrome c oxidase subunit 2 (227 aa).

Residues 1-14 (MAYPFQLGLQDATS) are Mitochondrial intermembrane-facing. The helical transmembrane segment at 15-45 (PIMEELLHFHDHTLMIVFLISSLVLYIISLM) threads the bilayer. Over 46-59 (LTTKLTHTSTMDAQ) the chain is Mitochondrial matrix. A helical membrane pass occupies residues 60–87 (EVETVWTILPAIILILIALPSLRILYMM). Topologically, residues 88–227 (DEINNPSLTV…YFETWSALMV (140 aa)) are mitochondrial intermembrane. The Cu cation site is built by histidine 161, cysteine 196, glutamate 198, cysteine 200, histidine 204, and methionine 207. Glutamate 198 contacts Mg(2+). Tyrosine 218 carries the phosphotyrosine modification.

It belongs to the cytochrome c oxidase subunit 2 family. Component of the cytochrome c oxidase (complex IV, CIV), a multisubunit enzyme composed of 14 subunits. The complex is composed of a catalytic core of 3 subunits MT-CO1, MT-CO2 and MT-CO3, encoded in the mitochondrial DNA, and 11 supernumerary subunits COX4I, COX5A, COX5B, COX6A, COX6B, COX6C, COX7A, COX7B, COX7C, COX8 and NDUFA4, which are encoded in the nuclear genome. The complex exists as a monomer or a dimer and forms supercomplexes (SCs) in the inner mitochondrial membrane with NADH-ubiquinone oxidoreductase (complex I, CI) and ubiquinol-cytochrome c oxidoreductase (cytochrome b-c1 complex, complex III, CIII), resulting in different assemblies (supercomplex SCI(1)III(2)IV(1) and megacomplex MCI(2)III(2)IV(2)). Found in a complex with TMEM177, COA6, COX18, COX20, SCO1 and SCO2. Interacts with TMEM177 in a COX20-dependent manner. Interacts with COX20. Interacts with COX16. It depends on Cu cation as a cofactor.

Its subcellular location is the mitochondrion inner membrane. It catalyses the reaction 4 Fe(II)-[cytochrome c] + O2 + 8 H(+)(in) = 4 Fe(III)-[cytochrome c] + 2 H2O + 4 H(+)(out). Component of the cytochrome c oxidase, the last enzyme in the mitochondrial electron transport chain which drives oxidative phosphorylation. The respiratory chain contains 3 multisubunit complexes succinate dehydrogenase (complex II, CII), ubiquinol-cytochrome c oxidoreductase (cytochrome b-c1 complex, complex III, CIII) and cytochrome c oxidase (complex IV, CIV), that cooperate to transfer electrons derived from NADH and succinate to molecular oxygen, creating an electrochemical gradient over the inner membrane that drives transmembrane transport and the ATP synthase. Cytochrome c oxidase is the component of the respiratory chain that catalyzes the reduction of oxygen to water. Electrons originating from reduced cytochrome c in the intermembrane space (IMS) are transferred via the dinuclear copper A center (CU(A)) of subunit 2 and heme A of subunit 1 to the active site in subunit 1, a binuclear center (BNC) formed by heme A3 and copper B (CU(B)). The BNC reduces molecular oxygen to 2 water molecules using 4 electrons from cytochrome c in the IMS and 4 protons from the mitochondrial matrix. In Canis adustus (Side-striped jackal), this protein is Cytochrome c oxidase subunit 2 (MT-CO2).